The following is a 212-amino-acid chain: Synaptosomal-associated protein 25 (212 aa).

2 consecutive t-SNARE coiled-coil homology domains span residues glutamine 26–methionine 88 and aspartate 148–leucine 210.

It belongs to the SNAP-25 family. Exclusively found in brain and ganglia.

It is found in the synapse. It localises to the synaptosome. In terms of biological role, may play an important role in the synaptic function of specific neuronal systems. Associates with proteins involved in vesicle docking and membrane fusion. This Drosophila melanogaster (Fruit fly) protein is Synaptosomal-associated protein 25 (Snap25).